We begin with the raw amino-acid sequence, 386 residues long: Delta(7)-sterol 5(6)-desaturase ERG3 (386 aa).

3 helical membrane-spanning segments follow: residues 120-140, 172-192, and 206-226; these read LSLF…VAYL, IPVM…GYSF, and AILW…YFLH. The 124-residue stretch at 214-337 folds into the Fatty acid hydroxylase domain; that stretch reads FILFTDCGIY…FTTLWDRLGN (124 aa). A Histidine box-1 motif is present at residues 226-230; that stretch reads HRWLH. Residues 239 to 243 carry the Histidine box-2 motif; the sequence is HKPHH. The helical transmembrane segment at 272 to 292 threads the bilayer; sequence PLLFPLHKVLYLFLFTFVNFW. The Histidine box-3 signature appears at 314–318; the sequence is HTVHH.

This sequence belongs to the sterol desaturase family. The cofactor is Fe cation.

It localises to the endoplasmic reticulum membrane. It catalyses the reaction a Delta(7)-sterol + 2 Fe(II)-[cytochrome b5] + O2 + 2 H(+) = a Delta(5),Delta(7)-sterol + 2 Fe(III)-[cytochrome b5] + 2 H2O. It participates in steroid metabolism; ergosterol biosynthesis; ergosterol from zymosterol: step 3/5. Functionally, C-5 sterol desaturase; part of the third module of ergosterol biosynthesis pathway that includes the late steps of the pathwa. ERG3 catalyzes the introduction of a C-5 double bond in the B ring to produce 5-dehydroepisterol. The third module or late pathway involves the ergosterol synthesis itself through consecutive reactions that mainly occur in the endoplasmic reticulum (ER) membrane. Firstly, the squalene synthase ERG9 catalyzes the condensation of 2 farnesyl pyrophosphate moieties to form squalene, which is the precursor of all steroids. Squalene synthase is crucial for balancing the incorporation of farnesyl diphosphate (FPP) into sterol and nonsterol isoprene synthesis. Secondly, the squalene epoxidase ERG1 catalyzes the stereospecific oxidation of squalene to (S)-2,3-epoxysqualene, which is considered to be a rate-limiting enzyme in steroid biosynthesis. Then, the lanosterol synthase ERG7 catalyzes the cyclization of (S)-2,3 oxidosqualene to lanosterol, a reaction that forms the sterol core. In the next steps, lanosterol is transformed to zymosterol through a complex process involving various demethylation, reduction and desaturation reactions. The lanosterol 14-alpha-demethylase ERG11 (also known as CYP51) catalyzes C14-demethylation of lanosterol to produce 4,4'-dimethyl cholesta-8,14,24-triene-3-beta-ol, which is critical for ergosterol biosynthesis. The C-14 reductase ERG24 reduces the C14=C15 double bond of 4,4-dimethyl-cholesta-8,14,24-trienol to produce 4,4-dimethyl-cholesta-8,24-dienol. 4,4-dimethyl-cholesta-8,24-dienol is substrate of the C-4 demethylation complex ERG25-ERG26-ERG27 in which ERG25 catalyzes the three-step monooxygenation required for the demethylation of 4,4-dimethyl and 4alpha-methylsterols, ERG26 catalyzes the oxidative decarboxylation that results in a reduction of the 3-beta-hydroxy group at the C-3 carbon to an oxo group, and ERG27 is responsible for the reduction of the keto group on the C-3. ERG28 has a role as a scaffold to help anchor ERG25, ERG26 and ERG27 to the endoplasmic reticulum and ERG29 regulates the activity of the iron-containing C4-methylsterol oxidase ERG25. Then, the sterol 24-C-methyltransferase ERG6 catalyzes the methyl transfer from S-adenosyl-methionine to the C-24 of zymosterol to form fecosterol. The C-8 sterol isomerase ERG2 catalyzes the reaction which results in unsaturation at C-7 in the B ring of sterols and thus converts fecosterol to episterol. The sterol-C5-desaturase ERG3 then catalyzes the introduction of a C-5 double bond in the B ring to produce 5-dehydroepisterol. The C-22 sterol desaturase ERG5 further converts 5-dehydroepisterol into ergosta-5,7,22,24(28)-tetraen-3beta-ol by forming the C-22(23) double bond in the sterol side chain. Finally, ergosta-5,7,22,24(28)-tetraen-3beta-ol is substrate of the C-24(28) sterol reductase ERG4 to produce ergosterol. The protein is Delta(7)-sterol 5(6)-desaturase ERG3 of Candida albicans (strain SC5314 / ATCC MYA-2876) (Yeast).